Consider the following 333-residue polypeptide: MVSSTPEMLQGGVTREQIVPSRKRIKLPAWLEIAKPRLIPLLLATTLGGMALSEGWPLPSLRLACTLGGGALAAAAAGVLNCIWEQDLDGRMQRTSGRALPSGRLSPTAAFIGAISCTLAAAALLVSGVNCLAAGLSLLGLCSYVLLYTAILKPRTPQNIVIGGVAGAIPPLVGAAAASGHVGLSGWWLFSLVMLWTPAHFWALALLLRDDYRAVGIPMLPVIQGPVVTVRAISRYGWATVLLSGFGVWALPEGGLLYGLLLIPFNARLLQMVHQLGAAPENVDRAKGLFRWSIFYMFGICLLLVVSRLPMAANFDLQAWSLLQQMASSGQFI.

The next 8 helical transmembrane spans lie at 63-83 (LACT…LNCI), 109-129 (AAFI…VSGV), 132-152 (LAAG…TAIL), 160-180 (IVIG…AASG), 188-208 (WLFS…ALLL), 214-234 (AVGI…RAIS), 245-265 (GFGV…LIPF), and 292-312 (WSIF…LPMA).

It belongs to the UbiA prenyltransferase family. Protoheme IX farnesyltransferase subfamily.

The protein localises to the cell inner membrane. The enzyme catalyses heme b + (2E,6E)-farnesyl diphosphate + H2O = Fe(II)-heme o + diphosphate. It participates in porphyrin-containing compound metabolism; heme O biosynthesis; heme O from protoheme: step 1/1. Functionally, converts heme B (protoheme IX) to heme O by substitution of the vinyl group on carbon 2 of heme B porphyrin ring with a hydroxyethyl farnesyl side group. The sequence is that of Protoheme IX farnesyltransferase from Prochlorococcus marinus (strain MIT 9313).